A 513-amino-acid polypeptide reads, in one-letter code: MTKLVNEMILVLDFGSQYNQLITRRIREFGVYSELHPHTLTAEEIKKMNPKGIILSGGPNSVYDEGSFRCDEKIFELDIPVLGICYGMQLMTHYLGGKVEAASQREYGKANIHIEGEPDLFKDLPNEQVVWMSHGDLVVEVPEGFTVDATSHHCPNSAMSKKDKKWYGVQFHPEVRHSEYGNDLLKNFVFGVCECVGEWSMENFIEIEMQKIRETVGDKQVLCALSGGVDSSVVAVLIHKAIGDQLTCIFVDHGLLRKGEAEGVMKTFSEGFNMNVIKVDAKDRFLNKLKGVSDPEQKRKIIGNEFIYVFDDEAEKLKGIDFLAQGTLYTDIIESGTATAQTIKSHHNVGGLPEDMQFELIEPLNTLFKDEVRALGTELGIPDEIVWRQPFPGPGLGIRVLGEVTEEKLEIVRESDAILREEIAKADLEKDIWQYFTVLPDIRSVGVMGDARTYDYTIGIRAVTSIDGMTSDWARIPWDVLEKISTRIVNEVKHINRVVYDITSKPPATIEWE.

In terms of domain architecture, Glutamine amidotransferase type-1 spans 8 to 198 (MILVLDFGSQ…VFGVCECVGE (191 aa)). Cys85 (nucleophile) is an active-site residue. Active-site residues include His172 and Glu174. The GMPS ATP-PPase domain occupies 199–388 (WSMENFIEIE…LGIPDEIVWR (190 aa)). Position 226–232 (226–232 (SGGVDSS)) interacts with ATP.

As to quaternary structure, homodimer.

It catalyses the reaction XMP + L-glutamine + ATP + H2O = GMP + L-glutamate + AMP + diphosphate + 2 H(+). Its pathway is purine metabolism; GMP biosynthesis; GMP from XMP (L-Gln route): step 1/1. In terms of biological role, catalyzes the synthesis of GMP from XMP. In Bacillus licheniformis (strain ATCC 14580 / DSM 13 / JCM 2505 / CCUG 7422 / NBRC 12200 / NCIMB 9375 / NCTC 10341 / NRRL NRS-1264 / Gibson 46), this protein is GMP synthase [glutamine-hydrolyzing].